A 248-amino-acid polypeptide reads, in one-letter code: Thioesterase FSL2 (248 aa).

Active-site charge relay system residues include serine 125, aspartate 195, and histidine 223.

It belongs to the LovG family.

It participates in secondary metabolite biosynthesis. In terms of biological role, thioesterase; part of the gene cluster that mediates the biosynthesis of fusarielins F, G and H, decaketide compounds with 5 methylations and a decaline core that act as mycoestrogens as they stimulate growth of MCF-7 breast cancer cells. The initial compound in the pathway is produced by the reducing polyketide synthase FSL1. FSL1 lacks an active enoyl reductase (ER) domain and biosynthesis of fusarielins relies on the trans-acting enoyl reductase FSL5, before it is released through hydrolysis catalyzed by the thioesterase FSL2. Fusarielins F, G, and H have a C11=C12 cis double bond and is fully reduced between C10 and C11 and between C12 and C13. FSL3 can be involved in the formation of the C11=C12 cis double bond by moving a hypothetical C10=C11 or C12=C13 trans double bond to form prefusarielin. Prefusarielin is oxygenated at C15 and C16 by the cytochrome P450 monooxygenase FSL4, resulting in fusarielin F, which subsequently is epoxidized into fusarielin G by the same enzyme. The final step in the pathway is a reduction of the carboxylic acid moiety to yield fusarielin H via a still undetermined mechanism. In Gibberella zeae (strain ATCC MYA-4620 / CBS 123657 / FGSC 9075 / NRRL 31084 / PH-1) (Wheat head blight fungus), this protein is Thioesterase FSL2.